We begin with the raw amino-acid sequence, 35 residues long: uncharacterized protein (35 aa).

Residues 10-30 (LMITASFFAIFIIIVVSVLLL) traverse the membrane as a helical segment.

The protein resides in the membrane. This is an uncharacterized protein from Salmonella typhimurium (strain LT2 / SGSC1412 / ATCC 700720).